Here is a 455-residue protein sequence, read N- to C-terminus: Keratin, type I cuticular Ha5 (455 aa).

Positions 1–97 (MASKCLKASF…FGEGILTGNE (97 aa)) are head. One can recognise an IF rod domain in the interval 97–408 (EKETMQSLND…GLLESEDSKL (312 aa)). The segment at 98–132 (KETMQSLNDRLASYLEKVRQLEQENASLESRIREW) is coil 1A. The interval 133–143 (CEQQVPYMCPD) is linker 1. A coil 1B region spans residues 144–244 (YQSYFRTMEE…HEEEVNSLRC (101 aa)). Positions 245–260 (QLGDRLNVEVDAAPPV) are linker 12. The interval 261–404 (DLNRVLDEMR…NTYRGLLESE (144 aa)) is coil 2. The segment at 405-455 (DSKLPCNPCAPDYSSSKSCLPCLPAVSCSTGAARTTCSPRPVCVPCPGGRF) is tail.

This sequence belongs to the intermediate filament family.

The sequence is that of Keratin, type I cuticular Ha5 from Mus musculus (Mouse).